The sequence spans 298 residues: Rhodomycin D methylesterase DauP (298 aa).

Positions proline 25–leucine 277 constitute an AB hydrolase-1 domain.

Belongs to the methyl esterase DnrP family.

It carries out the reaction rhodomycin D + H2O = 10-carboxy-13-deoxycarminomycin + methanol + H(+). The enzyme catalyses 4-O-methylrhodomycin D + H2O = 10-carboxy-13-deoxydaunorubicin + methanol + H(+). It participates in antibiotic biosynthesis; daunorubicin biosynthesis. The protein operates within antibiotic biosynthesis; carminomycin biosynthesis. Involved in the biosynthesis of the anthracyclines carminomycin and daunorubicin (daunomycin) which are aromatic polyketide antibiotics that exhibit high cytotoxicity and are widely applied in the chemotherapy of a variety of cancers. Catalyzes the removal of methyl group from the carbomethoxy group of rhodomycin D (10-carbomethoxy-13-deoxycarminomycin) and 4-O-methylrhodomycin D to yield 10-carboxy-13-deoxycarminomycin and 10-carboxy-13-deoxydaunorubicin, respectively. Could be also involved in the decarboxylation of 10-carboxy-13-deoxycarminomycin and 10-carboxy-13-deoxydaunorubicin to yield 13-deoxycarminomycin and 13-deoxydaunorubicin, respectively. It seems that DauK may influence the ability of DauP to carry out the decarboxylation. This is Rhodomycin D methylesterase DauP (dauP) from Streptomyces sp. (strain C5).